The sequence spans 104 residues: Large ribosomal subunit protein bL21 (104 aa).

This sequence belongs to the bacterial ribosomal protein bL21 family. As to quaternary structure, part of the 50S ribosomal subunit. Contacts protein L20.

This protein binds to 23S rRNA in the presence of protein L20. The protein is Large ribosomal subunit protein bL21 of Gluconobacter oxydans (strain 621H) (Gluconobacter suboxydans).